The primary structure comprises 317 residues: Aspartate carbamoyltransferase catalytic subunit (317 aa).

Residues Arg66 and Thr67 each contribute to the carbamoyl phosphate site. Residue Lys94 coordinates L-aspartate. The carbamoyl phosphate site is built by Arg116, His144, and Gln147. Residues Arg177 and Arg231 each contribute to the L-aspartate site. Carbamoyl phosphate contacts are provided by Gly272 and Pro273.

This sequence belongs to the aspartate/ornithine carbamoyltransferase superfamily. ATCase family. In terms of assembly, heterododecamer (2C3:3R2) of six catalytic PyrB chains organized as two trimers (C3), and six regulatory PyrI chains organized as three dimers (R2).

The enzyme catalyses carbamoyl phosphate + L-aspartate = N-carbamoyl-L-aspartate + phosphate + H(+). The protein operates within pyrimidine metabolism; UMP biosynthesis via de novo pathway; (S)-dihydroorotate from bicarbonate: step 2/3. In terms of biological role, catalyzes the condensation of carbamoyl phosphate and aspartate to form carbamoyl aspartate and inorganic phosphate, the committed step in the de novo pyrimidine nucleotide biosynthesis pathway. This is Aspartate carbamoyltransferase catalytic subunit from Rhodopseudomonas palustris (strain BisB5).